A 436-amino-acid chain; its full sequence is WD repeat domain phosphoinositide-interacting protein 2 (436 aa).

The WD 1 repeat unit spans residues 182–222; the sequence is AHDSPLAALAFDASGTKLATASEKGTVIRVFSIPEGQKLFE. The L/FRRG motif signature appears at 223-226; it reads FRRG. WD repeat units lie at residues 228-267 and 311-349; these read KRCV…EKPQ and GHKN…GGEC.

This sequence belongs to the WD repeat PROPPIN family.

The protein localises to the preautophagosomal structure membrane. Functionally, component of the autophagy machinery that controls the major intracellular degradation process by which cytoplasmic materials are packaged into autophagosomes and delivered to lysosomes for degradation. Involved in an early step of the formation of preautophagosomal structures. This is WD repeat domain phosphoinositide-interacting protein 2 (WIPI2) from Gallus gallus (Chicken).